The chain runs to 630 residues: Mitochondrial Rho GTPase 1 (630 aa).

A Miro 1 domain is found at 1-168 (MKEVRVVICG…FYMCRACVIY (168 aa)). The Cytoplasmic segment spans residues 1–598 (MKEVRVVICG…EEDSNKTNYQ (598 aa)). GTP-binding positions include 10–17 (GDQGVGKS), 57–61 (DTQSD), and 113–116 (NKSE). EF-hand domains are found at residues 184–219 (ATIH…CFSK) and 304–339 (KGYR…TPGL). Positions 197, 199, 201, 208, 317, 319, 321, and 328 each coordinate Ca(2+). In terms of domain architecture, Miro 2 spans 419 to 579 (RNVFLCFVVG…FIQLAESAQY (161 aa)). Residues 428–435 (GSKSCGKT), 459–463 (EFQST), and 527–530 (TKAD) each bind GTP. A helical; Anchor for type IV membrane protein transmembrane segment spans residues 599 to 619 (LVAALTAFGALLLSVGGSLTW). Over 620 to 630 (KIIKHQYYSKK) the chain is Mitochondrial intermembrane.

It belongs to the mitochondrial Rho GTPase family.

It localises to the mitochondrion outer membrane. Its function is as follows. Mitochondrial GTPase involved in mitochondrial trafficking. Probably involved in control of anterograde transport of mitochondria and their subcellular distribution. The polypeptide is Mitochondrial Rho GTPase 1 (gem1) (Schizosaccharomyces pombe (strain 972 / ATCC 24843) (Fission yeast)).